Reading from the N-terminus, the 261-residue chain is Type III pantothenate kinase (261 aa).

ATP is bound at residue 6 to 13 (DVGNTNTV). Residue 107–110 (GADR) coordinates substrate. Catalysis depends on Asp109, which acts as the Proton acceptor. Asp129 serves as a coordination point for K(+). An ATP-binding site is contributed by Thr132. Thr183 serves as a coordination point for substrate.

It belongs to the type III pantothenate kinase family. In terms of assembly, homodimer. NH4(+) serves as cofactor. Requires K(+) as cofactor.

It localises to the cytoplasm. The enzyme catalyses (R)-pantothenate + ATP = (R)-4'-phosphopantothenate + ADP + H(+). Its pathway is cofactor biosynthesis; coenzyme A biosynthesis; CoA from (R)-pantothenate: step 1/5. Functionally, catalyzes the phosphorylation of pantothenate (Pan), the first step in CoA biosynthesis. In Kosmotoga olearia (strain ATCC BAA-1733 / DSM 21960 / TBF 19.5.1), this protein is Type III pantothenate kinase.